The chain runs to 338 residues: Lipoate-protein ligase A (338 aa).

In terms of domain architecture, BPL/LPL catalytic spans 29 to 216 (PATQRVLFLW…AFFAHYGERV (188 aa)). ATP-binding positions include R71, 76–79 (GAVF), and K134. K134 contributes to the (R)-lipoate binding site.

The protein belongs to the LplA family. In terms of assembly, monomer.

It localises to the cytoplasm. The enzyme catalyses L-lysyl-[lipoyl-carrier protein] + (R)-lipoate + ATP = N(6)-[(R)-lipoyl]-L-lysyl-[lipoyl-carrier protein] + AMP + diphosphate + H(+). It functions in the pathway protein modification; protein lipoylation via exogenous pathway; protein N(6)-(lipoyl)lysine from lipoate: step 1/2. The protein operates within protein modification; protein lipoylation via exogenous pathway; protein N(6)-(lipoyl)lysine from lipoate: step 2/2. Its function is as follows. Catalyzes both the ATP-dependent activation of exogenously supplied lipoate to lipoyl-AMP and the transfer of the activated lipoyl onto the lipoyl domains of lipoate-dependent enzymes. The polypeptide is Lipoate-protein ligase A (Escherichia coli O6:K15:H31 (strain 536 / UPEC)).